A 233-amino-acid chain; its full sequence is Sugar fermentation stimulation protein homolog (233 aa).

This sequence belongs to the SfsA family.

This chain is Sugar fermentation stimulation protein homolog, found in Pyrobaculum neutrophilum (strain DSM 2338 / JCM 9278 / NBRC 100436 / V24Sta) (Thermoproteus neutrophilus).